Here is a 232-residue protein sequence, read N- to C-terminus: Ribose-5-phosphate isomerase A (232 aa).

Residues 34–37, 89–92, and 102–105 each bind substrate; these read TGST, DGAD, and KGGG. Glu-111 acts as the Proton acceptor in catalysis. Lys-129 contacts substrate.

Belongs to the ribose 5-phosphate isomerase family. As to quaternary structure, homodimer.

It catalyses the reaction aldehydo-D-ribose 5-phosphate = D-ribulose 5-phosphate. Its pathway is carbohydrate degradation; pentose phosphate pathway; D-ribose 5-phosphate from D-ribulose 5-phosphate (non-oxidative stage): step 1/1. In terms of biological role, catalyzes the reversible conversion of ribose-5-phosphate to ribulose 5-phosphate. The sequence is that of Ribose-5-phosphate isomerase A from Protochlamydia amoebophila (strain UWE25).